Here is a 411-residue protein sequence, read N- to C-terminus: SH3 and cysteine-rich domain-containing protein 2 (411 aa).

A disordered region spans residues 1–29 (MTEMSEKENEPDDAATHSPPGTVSALQET). The span at 19–29 (PPGTVSALQET) shows a compositional bias: polar residues. Ser48 bears the Phosphoserine mark. A disordered region spans residues 64–95 (TEVLLTPPTPLPPPSPPPTASDRGLATPSPSP). Residues 70–82 (PPTPLPPPSPPPT) show a composition bias toward pro residues. Residues 110–161 (LHSFQEHVFKRASPCELCHQLIVGNSKQGLRCKMCKVSVHLWCSEEISHQQC) form a Phorbol-ester/DAG-type zinc finger. Disordered regions lie at residues 174–203 (SSPLLVHEPPPVCATSKESPPTGDSGKVDP) and 219–288 (RSSF…ATLR). Low complexity predominate over residues 219–232 (RSSFSSTSESPTRS). 2 SH3 domains span residues 292 to 351 (GPMY…RVRP) and 354 to 411 (NVWR…LTEI).

Interacts (via SH3 domains) with CACNA1S. Interacts (via SH3 domains) with CACNA1C. Has much lower affinity for CACNA1C than for CACNA1S.

Its subcellular location is the cytoplasm. The protein localises to the cytosol. The protein resides in the cell membrane. It localises to the sarcolemma. Plays a redundant role in promoting the expression of calcium channel CACNA1S at the cell membrane, and thereby contributes to increased channel activity. Slows down the inactivation rate of the calcium channel CACNA1C. The sequence is that of SH3 and cysteine-rich domain-containing protein 2 (STAC2) from Homo sapiens (Human).